Reading from the N-terminus, the 189-residue chain is Endoribonuclease YbeY (189 aa).

Polar residues predominate over residues 1-10; that stretch reads MKERSSSPGT. The interval 1–23 is disordered; sequence MKERSSSPGTPDSGRRARPKPAK. Residues His141, His145, and His151 each coordinate Zn(2+).

The protein belongs to the endoribonuclease YbeY family. Zn(2+) is required as a cofactor.

Its subcellular location is the cytoplasm. Its function is as follows. Single strand-specific metallo-endoribonuclease involved in late-stage 70S ribosome quality control and in maturation of the 3' terminus of the 16S rRNA. This is Endoribonuclease YbeY from Nitrosospira multiformis (strain ATCC 25196 / NCIMB 11849 / C 71).